The sequence spans 318 residues: Olfactory receptor 5M5 (318 aa).

The Extracellular segment spans residues 1–31 (MLAPKKMVRGNYSMVTEFILLGLTDRPELQP). An N-linked (GlcNAc...) asparagine glycan is attached at Asn11. The helical transmembrane segment at 32–52 (LLFVLFLVIYLITVGGNLGMM) threads the bilayer. At 53–60 (VLIRIDSR) the chain is on the cytoplasmic side. A helical transmembrane segment spans residues 61–81 (LHTPMYYFLASLSCLDLCYST). The Extracellular portion of the chain corresponds to 82 to 105 (NVTPKMLVNFLSEKKTISYAACLV). Cys103 and Cys195 form a disulfide bridge. Residues 106–126 (QCYFFIAMVITEYYMLAVMAY) traverse the membrane as a helical segment. The Cytoplasmic portion of the chain corresponds to 127–139 (DRYMAICNPLLYS). Residues 140–160 (SKMSKGVCVRLIAGPYIYGFL) traverse the membrane as a helical segment. Residues 161-202 (SGLMETMWTYRLTFCGSNIINHFYCADPPLIRLSCSDTFIKE) lie on the Extracellular side of the membrane. Residues 203-223 (TSMFVVAGFNLSNSLFIILIS) form a helical membrane-spanning segment. Residues 224–243 (YLFILIAILRMRSAEGRRKA) are Cytoplasmic-facing. A helical membrane pass occupies residues 244–264 (FSTCGSHLVAVTVFYGTLFCM). The Extracellular segment spans residues 265-277 (YVRPPTDKSVEQS). A helical membrane pass occupies residues 278 to 298 (KIIAVFYTFVSPMLNPIIYSL). Residues 299 to 318 (RNKDVKHAFWKLVRRNVLSK) are Cytoplasmic-facing.

It belongs to the G-protein coupled receptor 1 family.

Its subcellular location is the cell membrane. In terms of biological role, potential odorant receptor. The polypeptide is Olfactory receptor 5M5 (Mus musculus (Mouse)).